The following is a 386-amino-acid chain: MRDLILVGGGLANGLIAWRLRQRYPQLNLLLIEAGEQPGGNHTWSFHEDDLTPGQHAWLAPLVAHAWPGYEVQFPDLRRRLARGYYSITSERFAEALHQALGENIWLNCSVSEVLPNSVRLANGEALLAGAVIDGRGVTASSAMQTGYQLFLGQQWRLTQPHGLTVPILMDATVAQQQGYRFVYTLPLSADTLLIEDTRYANVPQRDDNALRQTVTDYAHSKGWQLAQLEREETGCLPITLAGDIQALWADAPGVPRSGMRAGLFHPTTGYSLPLAVALADAIADSPRLGSVPLYQLTRQFAERHWRRQGFFRLLNRMLFLAGREENRWRVMQRFYGLPEPTVERFYAGRLSLFDKARILTGKPPVPLGEAWRAALNHFPDRRDKG.

3–33 (DLILVGGGLANGLIAWRLRQRYPQLNLLLIE) provides a ligand contact to NAD(+).

Belongs to the lycopene cyclase family. It depends on FAD as a cofactor.

It catalyses the reaction a carotenoid psi-end group = a carotenoid beta-end derivative. The enzyme catalyses all-trans-lycopene = gamma-carotene. It carries out the reaction gamma-carotene = all-trans-beta-carotene. It functions in the pathway carotenoid biosynthesis; beta-carotene biosynthesis. Functionally, catalyzes the double cyclization reaction which converts lycopene to beta-carotene. This chain is Lycopene beta-cyclase, found in Pseudescherichia vulneris (Escherichia vulneris).